We begin with the raw amino-acid sequence, 301 residues long: Probable actin-related protein 2/3 complex subunit 2 (301 aa).

This sequence belongs to the ARPC2 family. As to quaternary structure, component of the Arp2/3 complex, at least composed of arx-1, arx-2, arx-4 and arx-6.

It localises to the cytoplasm. It is found in the cytoskeleton. Its function is as follows. Functions as actin-binding component of the Arp2/3 complex which is involved in regulation of actin polymerization and together with an activating nucleation-promoting factor (NPF) mediates the formation of branched actin networks. Seems to contact the mother actin filament. Plays a role in time-dependent memory loss and the retention of conditioned behavior over time. The protein is Probable actin-related protein 2/3 complex subunit 2 of Caenorhabditis elegans.